The sequence spans 256 residues: Thiazole synthase (256 aa).

The Schiff-base intermediate with DXP role is filled by lysine 95. Residues glycine 156, 182–183, and 204–205 each bind 1-deoxy-D-xylulose 5-phosphate; these read AG and NT.

Belongs to the ThiG family. Homotetramer. Forms heterodimers with either ThiH or ThiS.

The protein localises to the cytoplasm. It carries out the reaction [ThiS sulfur-carrier protein]-C-terminal-Gly-aminoethanethioate + 2-iminoacetate + 1-deoxy-D-xylulose 5-phosphate = [ThiS sulfur-carrier protein]-C-terminal Gly-Gly + 2-[(2R,5Z)-2-carboxy-4-methylthiazol-5(2H)-ylidene]ethyl phosphate + 2 H2O + H(+). The protein operates within cofactor biosynthesis; thiamine diphosphate biosynthesis. In terms of biological role, catalyzes the rearrangement of 1-deoxy-D-xylulose 5-phosphate (DXP) to produce the thiazole phosphate moiety of thiamine. Sulfur is provided by the thiocarboxylate moiety of the carrier protein ThiS. In vitro, sulfur can be provided by H(2)S. This Salmonella agona (strain SL483) protein is Thiazole synthase.